We begin with the raw amino-acid sequence, 422 residues long: UDP-N-acetylglucosamine 1-carboxyvinyltransferase (422 aa).

Lys-22 to Asn-23 is a binding site for phosphoenolpyruvate. Arg-93 contributes to the UDP-N-acetyl-alpha-D-glucosamine binding site. Cys-117 functions as the Proton donor in the catalytic mechanism. Cys-117 bears the 2-(S-cysteinyl)pyruvic acid O-phosphothioketal mark. UDP-N-acetyl-alpha-D-glucosamine-binding positions include Arg-122–Gln-126, Asp-305, and Ile-327.

This sequence belongs to the EPSP synthase family. MurA subfamily.

It is found in the cytoplasm. It catalyses the reaction phosphoenolpyruvate + UDP-N-acetyl-alpha-D-glucosamine = UDP-N-acetyl-3-O-(1-carboxyvinyl)-alpha-D-glucosamine + phosphate. The protein operates within cell wall biogenesis; peptidoglycan biosynthesis. Its function is as follows. Cell wall formation. Adds enolpyruvyl to UDP-N-acetylglucosamine. In Bordetella parapertussis (strain 12822 / ATCC BAA-587 / NCTC 13253), this protein is UDP-N-acetylglucosamine 1-carboxyvinyltransferase.